Consider the following 200-residue polypeptide: Holliday junction resolvase RecU (200 aa).

4 residues coordinate Mg(2+): Thr82, Asp84, Glu97, and Gln116.

This sequence belongs to the RecU family. Mg(2+) serves as cofactor.

It localises to the cytoplasm. It catalyses the reaction Endonucleolytic cleavage at a junction such as a reciprocal single-stranded crossover between two homologous DNA duplexes (Holliday junction).. Endonuclease that resolves Holliday junction intermediates in genetic recombination. Cleaves mobile four-strand junctions by introducing symmetrical nicks in paired strands. Promotes annealing of linear ssDNA with homologous dsDNA. Required for DNA repair, homologous recombination and chromosome segregation. In Streptococcus gordonii (strain Challis / ATCC 35105 / BCRC 15272 / CH1 / DL1 / V288), this protein is Holliday junction resolvase RecU.